The sequence spans 234 residues: Chromatin remodeling protein EBS (234 aa).

The 116-residue stretch at 29-144 (KVVRAGDCVL…AATGAFTPDR (116 aa)) folds into the BAH domain. A PHD-type zinc finger spans residues 146 to 197 (AVYCKCEMPYNPDDLMVQCEGCKDWYHPACVGMTIEEAKKLDHFVCAECSSD).

Belongs to the SHL1/EBS protein family. Recognizes di- and trimethylated histone H3 at lysine 4 (H3K4me2 and H3K4me3). Interacts with HDA6. Expressed ubiquitously, with higher levels in floral buds.

The protein localises to the nucleus. Its function is as follows. Chromatin remodeling factor that binds to methylated histone (e.g. H3K4me2/3) to prevent their acetylation (e.g. H3K9K14Ac), likely by recruiting histone deacetylase (HDAC) complexes, and thus regulating the transcription of target genes. Negative regulator in developmental processes in a gibberellic acid- (GA-) dependent manner, such as germination, flowering induction, and flower organ specification, probably by modulating developmental gene expression. Involved in the chromatin-mediated repression of floral initiation and controls genes regulating flowering. Negatively regulates the expression of the floral integrator FT epigenetically, by preventing high levels of H3 acetylation, thus maintaining an inactive chromatin conformation at FT locus. The protein is Chromatin remodeling protein EBS of Arabidopsis thaliana (Mouse-ear cress).